A 157-amino-acid polypeptide reads, in one-letter code: MTRDEKAKIVAELTDGFKNSEAVLVSDFKGLSVKALENLRNNAREVDVKVQVVKNTLANIALKNASKDGMELKDTNIFLWGNQIDVCKVAAKFEEQNESFKIKTAYMDGEVASLSKIVALSKLPSRDELIAMLLQVWNAPIQNFTIGLNALKEKKSA.

Belongs to the universal ribosomal protein uL10 family. As to quaternary structure, part of the ribosomal stalk of the 50S ribosomal subunit. The N-terminus interacts with L11 and the large rRNA to form the base of the stalk. The C-terminus forms an elongated spine to which L12 dimers bind in a sequential fashion forming a multimeric L10(L12)X complex.

In terms of biological role, forms part of the ribosomal stalk, playing a central role in the interaction of the ribosome with GTP-bound translation factors. The sequence is that of Large ribosomal subunit protein uL10 from Campylobacter hominis (strain ATCC BAA-381 / DSM 21671 / CCUG 45161 / LMG 19568 / NCTC 13146 / CH001A).